The following is a 326-amino-acid chain: Olfactory receptor 11H12 (326 aa).

At 1-44 (MCPLTLQVTGLMNVSEPNSSFAFVNEFILQGFTCEWTIQIFLFS) the chain is on the extracellular side. N-linked (GlcNAc...) asparagine glycosylation is found at Asn13 and Asn18. A helical membrane pass occupies residues 45-65 (LFTTTYALTITGNGAIAFVLW). Topologically, residues 66–72 (CDWRLHT) are cytoplasmic. A helical membrane pass occupies residues 73-93 (PMYMFLGNFSFLEIWYVSSTV). Over 94–112 (PKMLVNFLSEKKNISFAGC) the chain is Extracellular. Asn106 carries an N-linked (GlcNAc...) asparagine glycan. The cysteines at positions 112 and 194 are disulfide-linked. Residues 113–133 (FLQFYFFFSLGTSECLLLTVM) form a helical membrane-spanning segment. Over 134-158 (AFDQYLAICRPLLYPNIMTGHLCAK) the chain is Cytoplasmic. Residues 159–179 (LVILCWVCGFLWFLIPIVLIS) form a helical membrane-spanning segment. The Extracellular segment spans residues 180–216 (QMPFCGPNIIDHVVCDPGPRFALDCVSAPRIQLFCYT). A helical transmembrane segment spans residues 217-237 (LSSLVIFGNFLFIIGSYTLVL). Topologically, residues 238–259 (KAVLGMPSSTGRHKAFSTCGSH) are cytoplasmic. Residues 260 to 280 (LAVVSLCYSSLMVMYVSPGLG) form a helical membrane-spanning segment. The Extracellular portion of the chain corresponds to 281–287 (HSTGMQK). The chain crosses the membrane as a helical span at residues 288 to 308 (IETLFYAMVTPLFNPLIYSLQ). Over 309–326 (NKEIKAALRKVLGSSNII) the chain is Cytoplasmic.

It belongs to the G-protein coupled receptor 1 family.

The protein resides in the cell membrane. Functionally, odorant receptor. This Homo sapiens (Human) protein is Olfactory receptor 11H12 (OR11H12).